A 501-amino-acid chain; its full sequence is Cytochrome P450 7A1 (501 aa).

A helical membrane pass occupies residues 4-24; that stretch reads IFWIWGICLSVCCCLWLILGL. A heme-binding site is contributed by C441.

This sequence belongs to the cytochrome P450 family. The cofactor is heme. Detected in liver.

The protein localises to the endoplasmic reticulum membrane. It is found in the microsome membrane. It catalyses the reaction cholesterol + reduced [NADPH--hemoprotein reductase] + O2 = 7alpha-hydroxycholesterol + oxidized [NADPH--hemoprotein reductase] + H2O + H(+). It carries out the reaction 4beta-hydroxycholesterol + reduced [NADPH--hemoprotein reductase] + O2 = 4beta,7alpha-dihydroxycholesterol + oxidized [NADPH--hemoprotein reductase] + H2O + H(+). The catalysed reaction is lathosterol + reduced [NADPH--hemoprotein reductase] + O2 = 7alpha,8alpha-epoxy-5alpha-cholestan-3beta-ol + oxidized [NADPH--hemoprotein reductase] + H2O + H(+). The enzyme catalyses lathosterol + reduced [NADPH--hemoprotein reductase] + O2 = 5alpha-cholestan-7-oxo-3beta-ol + oxidized [NADPH--hemoprotein reductase] + H2O + H(+). It catalyses the reaction 7-dehydrocholesterol + reduced [NADPH--hemoprotein reductase] + O2 = 7-oxocholesterol + oxidized [NADPH--hemoprotein reductase] + H2O + H(+). It carries out the reaction (24S)-hydroxycholesterol + reduced [NADPH--hemoprotein reductase] + O2 = (24S)-7alpha-dihydroxycholesterol + oxidized [NADPH--hemoprotein reductase] + H2O + H(+). The catalysed reaction is (24R)-hydroxycholesterol + reduced [NADPH--hemoprotein reductase] + O2 = (24R)-7alpha-dihydroxycholesterol + oxidized [NADPH--hemoprotein reductase] + H2O + H(+). The protein operates within lipid metabolism; bile acid biosynthesis. Its pathway is steroid metabolism; cholesterol degradation. Functionally, a cytochrome P450 monooxygenase involved in the metabolism of endogenous cholesterol and its oxygenated derivatives (oxysterols). Mechanistically, uses molecular oxygen inserting one oxygen atom into a substrate, and reducing the second into a water molecule, with two electrons provided by NADPH via cytochrome P450 reductase (CPR; NADPH-ferrihemoprotein reductase). Functions as a critical regulatory enzyme of bile acid biosynthesis and cholesterol homeostasis. Catalyzes the hydroxylation of carbon hydrogen bond at 7-alpha position of cholesterol, a rate-limiting step in cholesterol catabolism and bile acid biosynthesis. 7-alpha hydroxylates several oxysterols, including 4beta-hydroxycholesterol and 24-hydroxycholesterol. Catalyzes the oxidation of the 7,8 double bond of 7-dehydrocholesterol and lathosterol with direct and predominant formation of the 7-keto derivatives. This Oryctolagus cuniculus (Rabbit) protein is Cytochrome P450 7A1 (CYP7A1).